A 361-amino-acid polypeptide reads, in one-letter code: Phospho-N-acetylmuramoyl-pentapeptide-transferase (361 aa).

10 helical membrane passes run 27–47, 70–90, 97–117, 134–154, 167–187, 199–219, 236–256, 263–283, 288–308, and 338–358; these read ILASLTALIVGLLCGPLMIRW, GTPTMGGVLILLAITVSCLLW, SLWLVLLVTLANGLVGWVDDY, YFWQSVIALVAVSYLYWNASL, TVTWDLGVFFPVLAYFVIVGS, GLAIMPIVMVAGALGVFAYAS, TGELTIFCSSIVGAGLGFLWY, VFMGDVGSLALGAALGIVAVV, LVLLIMGGLFVIETLSVILQV, and KVIVRFWIITVVFVLCGLATL.

This sequence belongs to the glycosyltransferase 4 family. MraY subfamily. The cofactor is Mg(2+).

Its subcellular location is the cell inner membrane. The catalysed reaction is UDP-N-acetyl-alpha-D-muramoyl-L-alanyl-gamma-D-glutamyl-meso-2,6-diaminopimeloyl-D-alanyl-D-alanine + di-trans,octa-cis-undecaprenyl phosphate = di-trans,octa-cis-undecaprenyl diphospho-N-acetyl-alpha-D-muramoyl-L-alanyl-D-glutamyl-meso-2,6-diaminopimeloyl-D-alanyl-D-alanine + UMP. Its pathway is cell wall biogenesis; peptidoglycan biosynthesis. Functionally, catalyzes the initial step of the lipid cycle reactions in the biosynthesis of the cell wall peptidoglycan: transfers peptidoglycan precursor phospho-MurNAc-pentapeptide from UDP-MurNAc-pentapeptide onto the lipid carrier undecaprenyl phosphate, yielding undecaprenyl-pyrophosphoryl-MurNAc-pentapeptide, known as lipid I. This is Phospho-N-acetylmuramoyl-pentapeptide-transferase from Legionella pneumophila subsp. pneumophila (strain Philadelphia 1 / ATCC 33152 / DSM 7513).